A 569-amino-acid chain; its full sequence is Proline--tRNA ligase (569 aa).

The protein belongs to the class-II aminoacyl-tRNA synthetase family. ProS type 1 subfamily. As to quaternary structure, homodimer.

The protein localises to the cytoplasm. It catalyses the reaction tRNA(Pro) + L-proline + ATP = L-prolyl-tRNA(Pro) + AMP + diphosphate. Functionally, catalyzes the attachment of proline to tRNA(Pro) in a two-step reaction: proline is first activated by ATP to form Pro-AMP and then transferred to the acceptor end of tRNA(Pro). As ProRS can inadvertently accommodate and process non-cognate amino acids such as alanine and cysteine, to avoid such errors it has two additional distinct editing activities against alanine. One activity is designated as 'pretransfer' editing and involves the tRNA(Pro)-independent hydrolysis of activated Ala-AMP. The other activity is designated 'posttransfer' editing and involves deacylation of mischarged Ala-tRNA(Pro). The misacylated Cys-tRNA(Pro) is not edited by ProRS. This Campylobacter jejuni subsp. doylei (strain ATCC BAA-1458 / RM4099 / 269.97) protein is Proline--tRNA ligase.